Here is a 267-residue protein sequence, read N- to C-terminus: Interleukin-1 beta (267 aa).

Residues 1–115 (MAPVPELTSE…DTWDDGFVCD (115 aa)) constitute a propeptide that is removed on maturation.

The protein belongs to the IL-1 family. In terms of assembly, monomer. In its precursor form, weakly interacts with full-length MEFV; the mature cytokine does not interact at all. Interacts with integrins ITGAV:ITGBV and ITGA5:ITGB1; integrin-binding is required for IL1B signaling. Interacts with cargo receptor TMED10; the interaction is direct and is required for the secretion of IL1B mature form. Interacts with HSP90AB1; the interaction facilitates cargo translocation into the ERGIC. Interacts with HSP90B1; the interaction facilitates cargo translocation into the ERGIC.

It is found in the cytoplasm. It localises to the cytosol. The protein localises to the secreted. Its subcellular location is the lysosome. The protein resides in the extracellular exosome. Functionally, potent pro-inflammatory cytokine. Initially discovered as the major endogenous pyrogen, induces prostaglandin synthesis, neutrophil influx and activation, T-cell activation and cytokine production, B-cell activation and antibody production, and fibroblast proliferation and collagen production. Promotes Th17 differentiation of T-cells. Synergizes with IL12/interleukin-12 to induce IFNG synthesis from T-helper 1 (Th1) cells. Plays a role in angiogenesis by inducing VEGF production synergistically with TNF and IL6. Involved in transduction of inflammation downstream of pyroptosis: its mature form is specifically released in the extracellular milieu by passing through the gasdermin-D (GSDMD) pore. This Felis catus (Cat) protein is Interleukin-1 beta (IL1B).